Here is a 550-residue protein sequence, read N- to C-terminus: Chaperonin GroEL 2 (550 aa).

ATP contacts are provided by residues 30 to 33, Lys-51, 87 to 91, Gly-415, 480 to 482, and Asp-496; these read TLGP, DGTTT, and NAA.

The protein belongs to the chaperonin (HSP60) family. In terms of assembly, forms a cylinder of 14 subunits composed of two heptameric rings stacked back-to-back. Interacts with the co-chaperonin GroES.

It localises to the cytoplasm. The catalysed reaction is ATP + H2O + a folded polypeptide = ADP + phosphate + an unfolded polypeptide.. Together with its co-chaperonin GroES, plays an essential role in assisting protein folding. The GroEL-GroES system forms a nano-cage that allows encapsulation of the non-native substrate proteins and provides a physical environment optimized to promote and accelerate protein folding. This chain is Chaperonin GroEL 2, found in Erythrobacter litoralis (strain HTCC2594).